A 460-amino-acid chain; its full sequence is Elongation factor 1-alpha (460 aa).

Residue Gly2 is modified to N,N,N-trimethylglycine. N6,N6-dimethyllysine; alternate is present on Lys3. Lys3 carries the N6-methyllysine; alternate modification. Residues 6–241 (KTHINVVVIG…DSIEPPKRPT (236 aa)) form the tr-type G domain. Residues 15–22 (GHVDSGKS) are G1. Residue 15-22 (GHVDSGKS) participates in GTP binding. Residues 71–75 (GITID) are G2. The residue at position 80 (Lys80) is an N6,N6,N6-trimethyllysine. Positions 92 to 95 (DAPG) are G3. Residues 92 to 96 (DAPGH) and 154 to 157 (NKMD) contribute to the GTP site. The segment at 154–157 (NKMD) is G4. A G5 region spans residues 193–195 (SGF). Lys317 carries the N6,N6-dimethyllysine; alternate modification. An N6-methyllysine; alternate modification is found at Lys317. At Lys391 the chain carries N6-methyllysine.

This sequence belongs to the TRAFAC class translation factor GTPase superfamily. Classic translation factor GTPase family. EF-Tu/EF-1A subfamily.

The protein resides in the cytoplasm. This protein promotes the GTP-dependent binding of aminoacyl-tRNA to the A-site of ribosomes during protein biosynthesis. This is Elongation factor 1-alpha (tef1) from Hypocrea jecorina (Trichoderma reesei).